The sequence spans 115 residues: Large ribosomal subunit protein bL20 (115 aa).

This sequence belongs to the bacterial ribosomal protein bL20 family.

Functionally, binds directly to 23S ribosomal RNA and is necessary for the in vitro assembly process of the 50S ribosomal subunit. It is not involved in the protein synthesizing functions of that subunit. This chain is Large ribosomal subunit protein bL20, found in Chlorobium limicola (strain DSM 245 / NBRC 103803 / 6330).